A 515-amino-acid polypeptide reads, in one-letter code: GMP synthase [glutamine-hydrolyzing] (515 aa).

Residues Thr-10 to Gly-200 form the Glutamine amidotransferase type-1 domain. Cys-87 serves as the catalytic Nucleophile. Catalysis depends on residues His-174 and Glu-176. The GMPS ATP-PPase domain maps to Trp-201–Arg-390. Ser-228–Ser-234 serves as a coordination point for ATP.

In terms of assembly, homodimer.

It catalyses the reaction XMP + L-glutamine + ATP + H2O = GMP + L-glutamate + AMP + diphosphate + 2 H(+). It participates in purine metabolism; GMP biosynthesis; GMP from XMP (L-Gln route): step 1/1. Functionally, catalyzes the synthesis of GMP from XMP. The sequence is that of GMP synthase [glutamine-hydrolyzing] from Bacillus thuringiensis subsp. konkukian (strain 97-27).